The primary structure comprises 799 residues: Serine/threonine-protein kinase AfsK (799 aa).

The Protein kinase domain maps to 16-271 (FEVLGRLGAG…QAQLAPHLFG (256 aa)). ATP is bound by residues 22 to 30 (LGAGGMGLV) and K44. S71 carries the phosphoserine; by autocatalysis modification. D138 functions as the Proton acceptor in the catalytic mechanism. T168 carries the phosphothreonine; by autocatalysis modification. 2 disordered regions span residues 295 to 343 (RRNG…PAPP) and 393 to 426 (LAAS…PAGW). Composition is skewed to pro residues over residues 325 to 343 (HAPP…PAPP) and 411 to 421 (VPAPAPAPPEA).

Belongs to the protein kinase superfamily. Ser/Thr protein kinase family. As to quaternary structure, interacts (via the N-terminal kinase domain) with KbpA; the interaction prevents autophosphorylation of AfsK. In terms of processing, autophosphorylated mainly on threonine residues. Some phosphorylation on serine residues. Autophosphorylation on Thr-168 is the major site enhancing kinase activity towards AfsR, and is regulated though interaction with KbpA.

It carries out the reaction L-seryl-[protein] + ATP = O-phospho-L-seryl-[protein] + ADP + H(+). It catalyses the reaction L-threonyl-[protein] + ATP = O-phospho-L-threonyl-[protein] + ADP + H(+). In terms of biological role, involved in the regulation of secondary metabolism by phosphorylating, on both Ser and Thr, the AfsR global regulatory protein involved in the control of secondary metabolism. This chain is Serine/threonine-protein kinase AfsK (afsK), found in Streptomyces coelicolor (strain ATCC BAA-471 / A3(2) / M145).